The sequence spans 636 residues: Chaperone protein HtpG (636 aa).

Residues 1–344 form an a; substrate-binding region; sequence MTLEADKQTH…SADLSLNVSR (344 aa). The b stretch occupies residues 345 to 561; it reads EILQSGPVVD…EGDLGLQMRQ (217 aa). Residues 562–636 are c; that stretch reads LLEASGQKVP…LNKLLLELSA (75 aa).

Belongs to the heat shock protein 90 family. In terms of assembly, homodimer.

Its subcellular location is the cytoplasm. Its function is as follows. Molecular chaperone. Has ATPase activity. The protein is Chaperone protein HtpG of Xylella fastidiosa (strain Temecula1 / ATCC 700964).